A 183-amino-acid polypeptide reads, in one-letter code: Holliday junction branch migration complex subunit RuvA (183 aa).

The tract at residues 1–64 (MIVAIEGIVS…EDSHKLYGFL (64 aa)) is domain I. Positions 65 to 138 (DTNEQRMFEL…SDAKINIENS (74 aa)) are domain II. Residue S138 is a region of interest, flexible linker. A domain III region spans residues 138–183 (SNQDHAQALAALLSLGFKQENILKVLRTCESQNTSELIKEALKKLA).

It belongs to the RuvA family. In terms of assembly, homotetramer. Forms an RuvA(8)-RuvB(12)-Holliday junction (HJ) complex. HJ DNA is sandwiched between 2 RuvA tetramers; dsDNA enters through RuvA and exits via RuvB. An RuvB hexamer assembles on each DNA strand where it exits the tetramer. Each RuvB hexamer is contacted by two RuvA subunits (via domain III) on 2 adjacent RuvB subunits; this complex drives branch migration. In the full resolvosome a probable DNA-RuvA(4)-RuvB(12)-RuvC(2) complex forms which resolves the HJ.

The protein resides in the cytoplasm. Its function is as follows. The RuvA-RuvB-RuvC complex processes Holliday junction (HJ) DNA during genetic recombination and DNA repair, while the RuvA-RuvB complex plays an important role in the rescue of blocked DNA replication forks via replication fork reversal (RFR). RuvA specifically binds to HJ cruciform DNA, conferring on it an open structure. The RuvB hexamer acts as an ATP-dependent pump, pulling dsDNA into and through the RuvAB complex. HJ branch migration allows RuvC to scan DNA until it finds its consensus sequence, where it cleaves and resolves the cruciform DNA. This chain is Holliday junction branch migration complex subunit RuvA, found in Campylobacter lari (strain RM2100 / D67 / ATCC BAA-1060).